The primary structure comprises 318 residues: Coproporphyrin III ferrochelatase (318 aa).

Residues histidine 186 and glutamate 268 each contribute to the Fe(2+) site.

It belongs to the ferrochelatase family.

It localises to the cytoplasm. It catalyses the reaction Fe-coproporphyrin III + 2 H(+) = coproporphyrin III + Fe(2+). Its pathway is porphyrin-containing compound metabolism; protoheme biosynthesis. In terms of biological role, involved in coproporphyrin-dependent heme b biosynthesis. Catalyzes the insertion of ferrous iron into coproporphyrin III to form Fe-coproporphyrin III. This Lactococcus lactis subsp. cremoris (strain MG1363) protein is Coproporphyrin III ferrochelatase.